Reading from the N-terminus, the 137-residue chain is MEQTLSIIKPDAVAKNVIGQILARFEAAGLRIAATKKTRLSRVDAEAFYAIHAERPFFKDLVDFMISGPVVVTVLEGENAMAKNRELMGATNPAEAEPGTIRADFADSIDANAVHGSDSVENAEIEINFFFAKREIH.

Positions 9, 57, 85, 91, 102, and 112 each coordinate ATP. Histidine 115 acts as the Pros-phosphohistidine intermediate in catalysis.

It belongs to the NDK family. In terms of assembly, homotetramer. Mg(2+) serves as cofactor.

It localises to the cytoplasm. It catalyses the reaction a 2'-deoxyribonucleoside 5'-diphosphate + ATP = a 2'-deoxyribonucleoside 5'-triphosphate + ADP. The catalysed reaction is a ribonucleoside 5'-diphosphate + ATP = a ribonucleoside 5'-triphosphate + ADP. Functionally, major role in the synthesis of nucleoside triphosphates other than ATP. The ATP gamma phosphate is transferred to the NDP beta phosphate via a ping-pong mechanism, using a phosphorylated active-site intermediate. The polypeptide is Nucleoside diphosphate kinase (Sulfurovum sp. (strain NBC37-1)).